Reading from the N-terminus, the 387-residue chain is Eukaryotic translation initiation factor 3 subunit M (387 aa).

One can recognise a PCI domain in the interval 181-340; the sequence is LSSKVMIELL…HKVHITSTMH (160 aa).

The protein belongs to the eIF-3 subunit M family. As to quaternary structure, component of the eukaryotic translation initiation factor 3 (eIF-3) complex. The eIF-3 complex interacts with pix.

Its subcellular location is the cytoplasm. The protein localises to the golgi apparatus. Its function is as follows. Component of the eukaryotic translation initiation factor 3 (eIF-3) complex, which is involved in protein synthesis of a specialized repertoire of mRNAs and, together with other initiation factors, stimulates binding of mRNA and methionyl-tRNAi to the 40S ribosome. The eIF-3 complex specifically targets and initiates translation of a subset of mRNAs involved in cell proliferation. The polypeptide is Eukaryotic translation initiation factor 3 subunit M (Drosophila erecta (Fruit fly)).